The following is a 97-amino-acid chain: Defensin alpha 4 (97 aa).

An N-terminal signal peptide occupies residues 1–19; it reads MRIIAILAAILLVALQVRA. The propeptide occupies 20–63; that stretch reads GPLQARGDEAPGQEQRGPEDQDISISFAWDKSSALQVSGSTRGM. 3 disulfide bridges follow: Cys-65–Cys-93, Cys-67–Cys-82, and Cys-72–Cys-92. Asp-97 is a propeptide.

It belongs to the alpha-defensin family. In terms of assembly, homodimer; homodimerization seems to be required for killing S.aureus, but not E.coli. Interacts with CD4. Interacts with Bacillus anthracis lef; homodimerization is required for the interaction. The three-dimensional structure formed by the three intramolecular disulfide bridges is indispensable for effective bacterial killing.

The protein localises to the secreted. Its subcellular location is the cytoplasmic vesicle. It is found in the secretory vesicle. Its function is as follows. Host-defense peptide that has antimicrobial activity against Gram-negative bacteria, and to a lesser extent also against Gram-positive bacteria and fungi. Exhibits antimicrobial activity against Gram-negative E.coli and E.aerogenes and Gram-positive S.faecalis, S.aureus and B.cereus and the yeast C.albicans (in vitro). Inhibits corticotropin (ACTH)-stimulated corticosterone production (in vitro). Inhibits enzymatic activity of B.anthracis lef/anthrax lethal factor (in vitro). The chain is Defensin alpha 4 (DEFA4) from Pan troglodytes (Chimpanzee).